Consider the following 406-residue polypeptide: Tryptophan synthase beta chain (406 aa).

Lys-99 is modified (N6-(pyridoxal phosphate)lysine).

This sequence belongs to the TrpB family. In terms of assembly, tetramer of two alpha and two beta chains. It depends on pyridoxal 5'-phosphate as a cofactor.

It catalyses the reaction (1S,2R)-1-C-(indol-3-yl)glycerol 3-phosphate + L-serine = D-glyceraldehyde 3-phosphate + L-tryptophan + H2O. Its pathway is amino-acid biosynthesis; L-tryptophan biosynthesis; L-tryptophan from chorismate: step 5/5. Its function is as follows. The beta subunit is responsible for the synthesis of L-tryptophan from indole and L-serine. This is Tryptophan synthase beta chain from Chelativorans sp. (strain BNC1).